The chain runs to 509 residues: Monocarboxylate transporter 9 (509 aa).

Over 1 to 12 (MELKKSPDGGWG) the chain is Cytoplasmic. Transmembrane regions (helical) follow at residues 13–33 (WVIVFVSFFTQFLCYGSPLAV), 53–73 (WVGSLASGVGLLASPVCSLCV), 80–100 (PVTIFSGFMVAGGLMLSSFAP), 102–122 (IYFLFFSYGIVVGLGCGLLYT), 137–157 (GLALGLISTGSSVGLFIYAAL), 164–184 (FYGLDGCLLIVGALALNILAC), 305–325 (VFSALFIAILLFDIGGFPPSL), 342–362 (IMPLISIIGIMTAVGKLLLGI), 372–392 (LYLYVATLIIMGLALCAIPFA), 398–418 (LALLSGILGFLTGNWSIFPYV), 433–453 (GILMFFAGLGNSLGPPIVGWF), and 462–482 (IAFYFSGFCVLLGGFILLLAA). The Cytoplasmic segment spans residues 483-509 (LPSWDTCNKQLPKPAPTTFLYKVASNV).

This sequence belongs to the major facilitator superfamily. Monocarboxylate porter (TC 2.A.1.13) family.

The protein resides in the cell membrane. The catalysed reaction is creatine(in) = creatine(out). It catalyses the reaction (R)-carnitine(in) = (R)-carnitine(out). Extracellular pH-and Na(+)-sensitive low-affinity creatine transporter. Also functions as a pH-independent carnitine efflux transporter. This chain is Monocarboxylate transporter 9 (SLC16A9), found in Pongo abelii (Sumatran orangutan).